Here is a 139-residue protein sequence, read N- to C-terminus: Small ribosomal subunit protein bS16 (139 aa).

The disordered stretch occupies residues 85-108; that stretch reads ESKSGKKPAKKATTKEASAKKPTD. Positions 97–108 are enriched in basic and acidic residues; that stretch reads TTKEASAKKPTD.

Belongs to the bacterial ribosomal protein bS16 family.

The protein is Small ribosomal subunit protein bS16 of Leuconostoc mesenteroides subsp. mesenteroides (strain ATCC 8293 / DSM 20343 / BCRC 11652 / CCM 1803 / JCM 6124 / NCDO 523 / NBRC 100496 / NCIMB 8023 / NCTC 12954 / NRRL B-1118 / 37Y).